A 92-amino-acid chain; its full sequence is Small ribosomal subunit protein uS19 (92 aa).

The segment at 1–27 (MARSIKKGPFADDHLKKKVEAQSGSEK) is disordered. The segment covering 9-27 (PFADDHLKKKVEAQSGSEK) has biased composition (basic and acidic residues).

This sequence belongs to the universal ribosomal protein uS19 family.

Its function is as follows. Protein S19 forms a complex with S13 that binds strongly to the 16S ribosomal RNA. The sequence is that of Small ribosomal subunit protein uS19 from Staphylococcus saprophyticus subsp. saprophyticus (strain ATCC 15305 / DSM 20229 / NCIMB 8711 / NCTC 7292 / S-41).